Here is a 149-residue protein sequence, read N- to C-terminus: Arginine repressor (149 aa).

This sequence belongs to the ArgR family.

It is found in the cytoplasm. It functions in the pathway amino-acid biosynthesis; L-arginine biosynthesis [regulation]. Its function is as follows. Regulates arginine biosynthesis genes. This Chlorobium phaeobacteroides (strain DSM 266 / SMG 266 / 2430) protein is Arginine repressor.